Here is a 267-residue protein sequence, read N- to C-terminus: tRNA pseudouridine synthase A (267 aa).

Residue Asp54 is the Nucleophile of the active site. A substrate-binding site is contributed by Tyr112.

This sequence belongs to the tRNA pseudouridine synthase TruA family. As to quaternary structure, homodimer.

The catalysed reaction is uridine(38/39/40) in tRNA = pseudouridine(38/39/40) in tRNA. Its function is as follows. Formation of pseudouridine at positions 38, 39 and 40 in the anticodon stem and loop of transfer RNAs. In Bordetella avium (strain 197N), this protein is tRNA pseudouridine synthase A.